A 197-amino-acid chain; its full sequence is Large ribosomal subunit protein bL9 (197 aa).

Positions 178–197 (GEFFDPEAQEDEAAAGETAQ) are disordered. The segment covering 181-191 (FDPEAQEDEAA) has biased composition (acidic residues).

It belongs to the bacterial ribosomal protein bL9 family.

In terms of biological role, binds to the 23S rRNA. This is Large ribosomal subunit protein bL9 from Bradyrhizobium sp. (strain BTAi1 / ATCC BAA-1182).